The chain runs to 110 residues: Nucleoid-associated protein PERMA_0533 (110 aa).

It belongs to the YbaB/EbfC family. As to quaternary structure, homodimer.

It localises to the cytoplasm. The protein localises to the nucleoid. Binds to DNA and alters its conformation. May be involved in regulation of gene expression, nucleoid organization and DNA protection. The polypeptide is Nucleoid-associated protein PERMA_0533 (Persephonella marina (strain DSM 14350 / EX-H1)).